The chain runs to 197 residues: Auxin-responsive protein IAA19 (197 aa).

Positions 13 to 17 (LRLGL) match the EAR-like (transcriptional repression) motif. Polar residues predominate over residues 35–47 (MNMTSSGSNSDQC). Residues 35-67 (MNMTSSGSNSDQCESGVVSSGGDAEKVNDSPAA) are disordered. A PB1 domain is found at 96–184 (LGYVKVSMDG…KRLRIMKRSD (89 aa)).

It belongs to the Aux/IAA family. In terms of assembly, homodimers and heterodimers. Interacts with the auxin response factor ARF7.

The protein resides in the nucleus. Functionally, aux/IAA proteins are short-lived transcriptional factors that function as repressors of early auxin response genes at low auxin concentrations. Repression is thought to result from the interaction with auxin response factors (ARFs), proteins that bind to the auxin-responsive promoter element (AuxRE). Formation of heterodimers with ARF proteins may alter their ability to modulate early auxin response genes expression. In Arabidopsis thaliana (Mouse-ear cress), this protein is Auxin-responsive protein IAA19 (IAA19).